Consider the following 311-residue polypeptide: Probable manganese-dependent inorganic pyrophosphatase (311 aa).

Residues His-9, Asp-13, Asp-15, Asp-77, His-99, and Asp-151 each coordinate Mn(2+).

It belongs to the PPase class C family. Mn(2+) serves as cofactor.

The protein resides in the cytoplasm. It carries out the reaction diphosphate + H2O = 2 phosphate + H(+). This is Probable manganese-dependent inorganic pyrophosphatase from Streptococcus pyogenes serotype M49 (strain NZ131).